The chain runs to 721 residues: Polyribonucleotide nucleotidyltransferase (721 aa).

2 residues coordinate Mg(2+): Asp495 and Asp501. Residues Pro562–Ile621 form the KH domain. One can recognise an S1 motif domain in the interval Gly631–Arg699. Residues Gly700–Asn721 are disordered.

This sequence belongs to the polyribonucleotide nucleotidyltransferase family. It depends on Mg(2+) as a cofactor.

It localises to the cytoplasm. It catalyses the reaction RNA(n+1) + phosphate = RNA(n) + a ribonucleoside 5'-diphosphate. Its function is as follows. Involved in mRNA degradation. Catalyzes the phosphorolysis of single-stranded polyribonucleotides processively in the 3'- to 5'-direction. This chain is Polyribonucleotide nucleotidyltransferase, found in Prochlorococcus marinus (strain MIT 9303).